The following is a 372-amino-acid chain: Peroxisomal biogenesis factor 3 (372 aa).

Over 1–15 the chain is Cytoplasmic; that stretch reads MLRSMWNFLKRHKKK. Residues 1–45 form a targeting to peroxisomes region; that stretch reads MLRSMWNFLKRHKKKCIFLGTVLGGVYILGKYGQKKLREIQEREA. A helical membrane pass occupies residues 16–36; it reads CIFLGTVLGGVYILGKYGQKK. Topologically, residues 37 to 116 are peroxisomal; it reads LREIQEREAA…LKIISFTRSI (80 aa). Residues 117 to 140 form a helical membrane-spanning segment; that stretch reads VAVYSTCMLVVLLRVQLNIIGGYI. The interaction with PEX19 stretch occupies residues 120-136; the sequence is YSTCMLVVLLRVQLNII. The Cytoplasmic segment spans residues 141-372; the sequence is YLDNATVGKN…AFSTPQQLEK (232 aa).

It belongs to the peroxin-3 family. Interacts with PEX19.

It is found in the peroxisome membrane. Functionally, involved in peroxisome biosynthesis and integrity. Assembles membrane vesicles before the matrix proteins are translocated. As a docking factor for PEX19, is necessary for the import of peroxisomal membrane proteins in the peroxisomes. The protein is Peroxisomal biogenesis factor 3 (Pex3) of Rattus norvegicus (Rat).